We begin with the raw amino-acid sequence, 219 residues long: 7-cyano-7-deazaguanine synthase (219 aa).

10-20 contributes to the ATP binding site; sequence FSGGQDSTTCL. The Zn(2+) site is built by Cys-187, Cys-196, Cys-199, and Cys-202.

This sequence belongs to the QueC family. Homodimer. Zn(2+) serves as cofactor.

The catalysed reaction is 7-carboxy-7-deazaguanine + NH4(+) + ATP = 7-cyano-7-deazaguanine + ADP + phosphate + H2O + H(+). It functions in the pathway purine metabolism; 7-cyano-7-deazaguanine biosynthesis. Functionally, catalyzes the ATP-dependent conversion of 7-carboxy-7-deazaguanine (CDG) to 7-cyano-7-deazaguanine (preQ(0)). This is 7-cyano-7-deazaguanine synthase from Lysinibacillus sphaericus (strain C3-41).